The primary structure comprises 293 residues: Ribosomal RNA small subunit methyltransferase H (293 aa).

S-adenosyl-L-methionine contacts are provided by residues 32-34, Asp51, Phe78, Asp99, and Gln106; that span reads GGH. The segment at 272–293 is disordered; that stretch reads SDEEIKENPASRSAKLRVGRRI.

This sequence belongs to the methyltransferase superfamily. RsmH family.

It localises to the cytoplasm. The catalysed reaction is cytidine(1402) in 16S rRNA + S-adenosyl-L-methionine = N(4)-methylcytidine(1402) in 16S rRNA + S-adenosyl-L-homocysteine + H(+). Its function is as follows. Specifically methylates the N4 position of cytidine in position 1402 (C1402) of 16S rRNA. This chain is Ribosomal RNA small subunit methyltransferase H, found in Sulfurihydrogenibium sp. (strain YO3AOP1).